A 231-amino-acid chain; its full sequence is Small ribosomal subunit protein uS2 (231 aa).

Residues 1-23 (MKVTNLSEKEERGGELTEAEKEE) are disordered. Basic and acidic residues predominate over residues 7 to 23 (SEKEERGGELTEAEKEE).

The protein belongs to the universal ribosomal protein uS2 family.

This chain is Small ribosomal subunit protein uS2 (rps2), found in Saccharolobus solfataricus (strain ATCC 35092 / DSM 1617 / JCM 11322 / P2) (Sulfolobus solfataricus).